The sequence spans 144 residues: 3-dehydroquinate dehydratase (144 aa).

The Proton acceptor role is filled by tyrosine 23. The substrate site is built by asparagine 74, histidine 80, and aspartate 87. Histidine 100 serves as the catalytic Proton donor. Substrate is bound by residues 101–102 and arginine 111; that span reads LS.

Belongs to the type-II 3-dehydroquinase family. Homododecamer.

It carries out the reaction 3-dehydroquinate = 3-dehydroshikimate + H2O. Its pathway is metabolic intermediate biosynthesis; chorismate biosynthesis; chorismate from D-erythrose 4-phosphate and phosphoenolpyruvate: step 3/7. Catalyzes a trans-dehydration via an enolate intermediate. The protein is 3-dehydroquinate dehydratase of Haemophilus ducreyi (strain 35000HP / ATCC 700724).